The chain runs to 461 residues: Cysteine--tRNA ligase (461 aa).

Residue C28 participates in Zn(2+) binding. The 'HIGH' region motif lies at I30 to H40. C209, H234, and E238 together coordinate Zn(2+). The 'KMSKS' region motif lies at K266–S270. K269 provides a ligand contact to ATP.

The protein belongs to the class-I aminoacyl-tRNA synthetase family. As to quaternary structure, monomer. Zn(2+) serves as cofactor.

It localises to the cytoplasm. It carries out the reaction tRNA(Cys) + L-cysteine + ATP = L-cysteinyl-tRNA(Cys) + AMP + diphosphate. This is Cysteine--tRNA ligase from Salmonella agona (strain SL483).